The sequence spans 196 residues: dITP/XTP pyrophosphatase (196 aa).

10 to 15 (SGNKGK) serves as a coordination point for substrate. Positions 40 and 69 each coordinate Mg(2+). Asp-69 acts as the Proton acceptor in catalysis. Substrate-binding positions include Ser-70, 147–150 (FGYD), Lys-170, and 175–176 (HR).

This sequence belongs to the HAM1 NTPase family. Homodimer. Mg(2+) is required as a cofactor.

The catalysed reaction is XTP + H2O = XMP + diphosphate + H(+). It catalyses the reaction dITP + H2O = dIMP + diphosphate + H(+). It carries out the reaction ITP + H2O = IMP + diphosphate + H(+). Pyrophosphatase that catalyzes the hydrolysis of nucleoside triphosphates to their monophosphate derivatives, with a high preference for the non-canonical purine nucleotides XTP (xanthosine triphosphate), dITP (deoxyinosine triphosphate) and ITP. Seems to function as a house-cleaning enzyme that removes non-canonical purine nucleotides from the nucleotide pool, thus preventing their incorporation into DNA/RNA and avoiding chromosomal lesions. The polypeptide is dITP/XTP pyrophosphatase (Prochlorococcus marinus (strain NATL1A)).